Consider the following 311-residue polypeptide: MKVAVLGAAGGIGQALALLLKTQLPAGSKLSLYDIAPVTPGVAVDLSHIPTAVEVKGFAGEDPTPALEGADVVLISAGVARKPGMDRSDLFNINAGIVRNLVEKCAAACPKALIGIITNPVNTTVAIAAEVLKAAGVYDKNRLFGVTTLDVIRSETFIAEAKGLNVDDVKINVIGGHSGVTILPLLSQVQGVSFSDEEVAALTTRIQNAGTEVVEAKAGGGSATLSMGQAACRFGLSLVRGLQGEENVIECAYVDGGSEHADFFAQPILLGKNGVESVLAYGEVSEFEANARDAMLDTLKADIKLGVEFVK.

Residues 7 to 13 (GAAGGIG) and Asp34 contribute to the NAD(+) site. 2 residues coordinate substrate: Arg81 and Arg87. NAD(+) is bound by residues Asn94 and 117-119 (ITN). Substrate contacts are provided by Asn119 and Arg153. Residue His177 is the Proton acceptor of the active site. Met227 is an NAD(+) binding site.

Belongs to the LDH/MDH superfamily. MDH type 1 family. As to quaternary structure, homodimer.

The catalysed reaction is (S)-malate + NAD(+) = oxaloacetate + NADH + H(+). In terms of biological role, catalyzes the reversible oxidation of malate to oxaloacetate. This chain is Malate dehydrogenase, found in Shewanella sediminis (strain HAW-EB3).